Here is a 213-residue protein sequence, read N- to C-terminus: MKILLIGPPGSGKGSVSELLTKNNALKHVSTGNLFRAILKEDSELARKIKEINVSGGKLVPDEITNQVAKSAIDELIKNQQSFILDGYPRTINQALALEQYCDLDYIFYLDINHQELMKRLTGRWMCPKCAGIYNIHFKKPQVDGVCDNDQATLYQRADDHEDAVSIRLDEYDKLTLPLIKHYKTNPRFIKINANQPIKDVYEDINNYLKQNK.

Position 10–15 (10–15) interacts with ATP; sequence GSGKGS. The interval 30-60 is NMP; that stretch reads STGNLFRAILKEDSELARKIKEINVSGGKLV. AMP contacts are provided by residues Thr-31, Arg-36, 58–60, 87–90, and Gln-94; these read KLV and GYPR. The LID stretch occupies residues 123–160; that stretch reads GRWMCPKCAGIYNIHFKKPQVDGVCDNDQATLYQRADD. Arg-124 contributes to the ATP binding site. 2 residues coordinate Zn(2+): Cys-127 and Cys-130. Residue 133–134 coordinates ATP; it reads IY. Zn(2+) contacts are provided by Cys-147 and Asp-150. 2 residues coordinate AMP: Arg-157 and Arg-168. An ATP-binding site is contributed by Gln-196.

The protein belongs to the adenylate kinase family. Monomer.

The protein localises to the cytoplasm. It carries out the reaction AMP + ATP = 2 ADP. Its pathway is purine metabolism; AMP biosynthesis via salvage pathway; AMP from ADP: step 1/1. In terms of biological role, catalyzes the reversible transfer of the terminal phosphate group between ATP and AMP. Plays an important role in cellular energy homeostasis and in adenine nucleotide metabolism. The chain is Adenylate kinase from Ureaplasma urealyticum serovar 10 (strain ATCC 33699 / Western).